The chain runs to 291 residues: Small ribosomal subunit biogenesis GTPase RsgA 1 (291 aa).

The region spanning 63–221 (ENALVRPPVA…VADTPGFSSI (159 aa)) is the CP-type G domain. GTP is bound by residues 112–115 (SKMD) and 164–172 (GQSGVGKST). Zn(2+) contacts are provided by Cys-245, Cys-250, His-252, and Cys-258.

It belongs to the TRAFAC class YlqF/YawG GTPase family. RsgA subfamily. As to quaternary structure, monomer. Associates with 30S ribosomal subunit, binds 16S rRNA. Zn(2+) is required as a cofactor.

The protein resides in the cytoplasm. Its function is as follows. One of several proteins that assist in the late maturation steps of the functional core of the 30S ribosomal subunit. Helps release RbfA from mature subunits. May play a role in the assembly of ribosomal proteins into the subunit. Circularly permuted GTPase that catalyzes slow GTP hydrolysis, GTPase activity is stimulated by the 30S ribosomal subunit. This is Small ribosomal subunit biogenesis GTPase RsgA 1 from Listeria monocytogenes serotype 4b (strain F2365).